A 196-amino-acid chain; its full sequence is MLIAWLVLAATLSRSIRASTTISIPITTQDIIAGDVFFEILSPSELEYTYRLRPAKDFGSAFSERLEGVPLVITDPPGACQEIRNARDLNGGVALIDRGECSFLTKTLRAEAAGALAAIITEYNPSSPEFEHYIEMIHDNSQQDANIPAGFLLGKNGVIIRSTLQRLKRVHALINIPVNLTFTPPSKINHPPWLGW.

The first 18 residues, 1-18 (MLIAWLVLAATLSRSIRA), serve as a signal peptide directing secretion. The 99-residue stretch at 73–171 (ITDPPGACQE…STLQRLKRVH (99 aa)) folds into the PA domain. N-linked (GlcNAc...) asparagine glycosylation occurs at N179.

Its subcellular location is the secreted. In terms of biological role, may be involved in iversification of muscle cell fates. This Drosophila melanogaster (Fruit fly) protein is PRADC1-like protein.